A 550-amino-acid polypeptide reads, in one-letter code: Chaperonin GroEL (550 aa).

ATP contacts are provided by residues 30-33 (TLGP), Lys51, 87-91 (DGTTT), Gly415, and Asp495.

Belongs to the chaperonin (HSP60) family. As to quaternary structure, forms a cylinder of 14 subunits composed of two heptameric rings stacked back-to-back. Interacts with the co-chaperonin GroES.

The protein localises to the cytoplasm. The enzyme catalyses ATP + H2O + a folded polypeptide = ADP + phosphate + an unfolded polypeptide.. In terms of biological role, together with its co-chaperonin GroES, plays an essential role in assisting protein folding. The GroEL-GroES system forms a nano-cage that allows encapsulation of the non-native substrate proteins and provides a physical environment optimized to promote and accelerate protein folding. In Shewanella woodyi (strain ATCC 51908 / MS32), this protein is Chaperonin GroEL.